We begin with the raw amino-acid sequence, 640 residues long: Protein UL35 (640 aa).

3 disordered regions span residues 353–373, 500–571, and 586–640; these read ERGE…PREA, ASSS…PRQR, and AYSH…LRHL. Residues 358-367 are compositionally biased toward acidic residues; it reads GDEDEEQEND. Residues 500–562 are compositionally biased toward low complexity; that stretch reads ASSSSASSSS…LSGSHGISSA (63 aa). A compositionally biased stretch (basic residues) spans 588 to 598; the sequence is SHHRRHRRRRS. Positions 631-640 are enriched in basic and acidic residues; sequence DDLAENLRHL.

Belongs to the herpesviridae pp85 family. Interacts with UL82. Interacts with isoform UL35A. Interacts with host UBP7; this interaction significantly inhibits the ability of USP7 to form nuclear bodies. Interacts with host DCAF1 (via C-terminus). Interacts with host SNX5; this interaction allows proper gB localization during viral assembly. Interacts with host TBK1; this interaction prevents type I interferon production. In terms of assembly, interacts with UL82. Interacts with isoform UL35. Interacts with host UBP7; this interaction significantly inhibits the ability of USP7 to form nuclear bodies. Interacts with host SNX5; this interaction allows proper gB localization during viral assembly.

The protein localises to the virion tegument. The protein resides in the host nucleus. It is found in the host cytoplasm. Plays important role in immediate-early gene expression through interaction with UL82. Forms nuclear bodies in host nucleus, independently of PML. In turn, UL35 nuclear bodies associate with and remodel PML bodies. Through interaction with host DCAF1, causes cells to accumulate in the G2 phase of the cell cycle by inducing a DNA damage response. Regulates viral assembly by controlling the localization of the essential gB through regulation of a retrograde transport pathway. This modulation occurs via binding and inhibition of host sorting nexin 5/SNX5. Also plays a role in the inhibition of pattern recognition receptor-mediated type I interferon signaling at the level of TBK1. In terms of biological role, promotes cytoplasmic UL82 accumulation and inhibits UL35-containing nuclear bodies formation. Regulates viral assembly by controlling the localization of the essential gB through regulation of a retrograde transport pathway. This modulation occurs via binding and inhibition of host sorting nexin 5/SNX5. In Homo sapiens (Human), this protein is Protein UL35 (UL35).